The chain runs to 369 residues: Protein HGH1 homolog (369 aa).

Belongs to the HGH1 family.

The sequence is that of Protein HGH1 homolog from Drosophila melanogaster (Fruit fly).